Here is a 124-residue protein sequence, read N- to C-terminus: MATINQLVRKPRQATTYKSASPALDKCPQRRGVCTRVYTTTPKKPNSALRKVAKVRLTNQEEVISYIGGEGHNLQEHSVVLIRGGRVKDLPGVRYHTVRGSLDAAGVAKRRQARSKYGAKRPKA.

Residues 1-25 (MATINQLVRKPRQATTYKSASPALD) are disordered. Aspartate 89 is subject to 3-methylthioaspartic acid.

The protein belongs to the universal ribosomal protein uS12 family. In terms of assembly, part of the 30S ribosomal subunit. Contacts proteins S8 and S17. May interact with IF1 in the 30S initiation complex.

Its function is as follows. With S4 and S5 plays an important role in translational accuracy. In terms of biological role, interacts with and stabilizes bases of the 16S rRNA that are involved in tRNA selection in the A site and with the mRNA backbone. Located at the interface of the 30S and 50S subunits, it traverses the body of the 30S subunit contacting proteins on the other side and probably holding the rRNA structure together. The combined cluster of proteins S8, S12 and S17 appears to hold together the shoulder and platform of the 30S subunit. The protein is Small ribosomal subunit protein uS12 of Stenotrophomonas maltophilia (strain R551-3).